A 293-amino-acid polypeptide reads, in one-letter code: Delta(3,5)-Delta(2,4)-dienoyl-CoA isomerase, mitochondrial (293 aa).

Substrate is bound by residues 84–88 and G142; that span reads AGLNL.

This sequence belongs to the enoyl-CoA hydratase/isomerase family.

It is found in the mitochondrion. The catalysed reaction is (3E,5Z)-octadienoyl-CoA = (2E,4E)-octadienoyl-CoA. The enzyme catalyses (3E,5Z,8Z,11Z,14Z)-eicosapentaenoyl-CoA = (2E,4E,8Z,11Z,14Z)-eicosapentaenoyl-CoA. Its pathway is lipid metabolism; fatty acid beta-oxidation. In terms of biological role, isomerization of 3-trans,5-cis-dienoyl-CoA to 2-trans,4-trans-dienoyl-CoA. This Dictyostelium discoideum (Social amoeba) protein is Delta(3,5)-Delta(2,4)-dienoyl-CoA isomerase, mitochondrial (ech1).